The chain runs to 492 residues: N-succinylglutamate 5-semialdehyde dehydrogenase (492 aa).

220-225 provides a ligand contact to NAD(+); the sequence is GSANTG. Active-site residues include E243 and C277.

The protein belongs to the aldehyde dehydrogenase family. AstD subfamily.

It catalyses the reaction N-succinyl-L-glutamate 5-semialdehyde + NAD(+) + H2O = N-succinyl-L-glutamate + NADH + 2 H(+). The protein operates within amino-acid degradation; L-arginine degradation via AST pathway; L-glutamate and succinate from L-arginine: step 4/5. Catalyzes the NAD-dependent reduction of succinylglutamate semialdehyde into succinylglutamate. The protein is N-succinylglutamate 5-semialdehyde dehydrogenase of Escherichia coli O139:H28 (strain E24377A / ETEC).